Consider the following 111-residue polypeptide: MATYEQVKDVPNHPDVYLIDVRRKEELQQTGFIPASINIPLDELDKALNLDGSAFKNKYGRSKPEKQSPIIFTCRSGNRVLEAEKIAKSQGYSNVVIYKGSWNEWAQKEGL.

The Rhodanese domain occupies 12 to 110 (NHPDVYLIDV…SWNEWAQKEG (99 aa)).

This is Rhodanese domain-containing protein CG4456 from Drosophila melanogaster (Fruit fly).